Here is a 103-residue protein sequence, read N- to C-terminus: Large ribosomal subunit protein bL21 (103 aa).

This sequence belongs to the bacterial ribosomal protein bL21 family. In terms of assembly, part of the 50S ribosomal subunit. Contacts protein L20.

This protein binds to 23S rRNA in the presence of protein L20. The sequence is that of Large ribosomal subunit protein bL21 from Borreliella burgdorferi (strain ZS7) (Borrelia burgdorferi).